Here is a 508-residue protein sequence, read N- to C-terminus: DNA-directed RNA polymerase subunit Rpo1C (508 aa).

Residues 1–123 (MASLLWRDTS…EIKEKYGENL (123 aa)) form a unknown region. A DNA-directed RNA polymerase subunit Rpo1C region spans residues 124–508 (SEDVQKVLDD…IYKGYPKTKK (385 aa)).

It belongs to the RNA polymerase beta' chain family. Part of the RNA polymerase complex.

The protein resides in the cytoplasm. It carries out the reaction RNA(n) + a ribonucleoside 5'-triphosphate = RNA(n+1) + diphosphate. In terms of biological role, DNA-dependent RNA polymerase (RNAP) catalyzes the transcription of DNA into RNA using the four ribonucleoside triphosphates as substrates. Forms part of the jaw domain. This is DNA-directed RNA polymerase subunit Rpo1C from Thermoplasma acidophilum (strain ATCC 25905 / DSM 1728 / JCM 9062 / NBRC 15155 / AMRC-C165).